An 80-amino-acid chain; its full sequence is Putative membrane protein insertion efficiency factor (80 aa).

The disordered stretch occupies residues 60–80; the sequence is SKTGKDPVPDRFSLKRNQEGE. Over residues 62-80 the composition is skewed to basic and acidic residues; that stretch reads TGKDPVPDRFSLKRNQEGE.

The protein belongs to the UPF0161 family.

It is found in the cell membrane. Its function is as follows. Could be involved in insertion of integral membrane proteins into the membrane. The chain is Putative membrane protein insertion efficiency factor from Streptococcus pneumoniae serotype 4 (strain ATCC BAA-334 / TIGR4).